The chain runs to 173 residues: Eggshell protein (173 aa).

The first 18 residues, 1–18, serve as a signal peptide directing secretion; the sequence is MKQSLTLVFLVAIGYATA. Positions 145–162 are enriched in gly residues; that stretch reads GSGKGKGGGKGGKGGKGG. Residues 145-173 form a disordered region; sequence GSGKGKGGGKGGKGGKGGTYKPSHYGGGY.

This Schistosoma mansoni (Blood fluke) protein is Eggshell protein.